Consider the following 446-residue polypeptide: Actin-related protein 6 (446 aa).

Positions 1–11 (MTGRGGAKKSR) are enriched in basic residues. The tract at residues 1–24 (MTGRGGAKKSRAAGPAPPTTTLVL) is disordered.

The protein belongs to the actin family. ARP6 subfamily. As to quaternary structure, component of the SWR1 chromatin remodeling complex.

The protein resides in the cytoplasm. It localises to the cytoskeleton. It is found in the nucleus. Its function is as follows. Component of the SWR1 complex which mediates the ATP-dependent exchange of histone H2A for the H2A variant H2A.Z leading to transcriptional regulation of selected genes by chromatin remodeling. Involved in chromosome stability. This Neurospora crassa (strain ATCC 24698 / 74-OR23-1A / CBS 708.71 / DSM 1257 / FGSC 987) protein is Actin-related protein 6 (arp-6).